A 204-amino-acid polypeptide reads, in one-letter code: Probable GTP-binding protein EngB (204 aa).

The EngB-type G domain maps to 23–195 (TLPEIAFVGR…ASALMQLLAM (173 aa)). Residues 31–38 (GRSNVGKS), 58–62 (GRTRE), 76–79 (DLPG), 143–146 (TKID), and 174–176 (FSA) each bind GTP. Mg(2+)-binding residues include Ser38 and Thr60.

This sequence belongs to the TRAFAC class TrmE-Era-EngA-EngB-Septin-like GTPase superfamily. EngB GTPase family. It depends on Mg(2+) as a cofactor.

In terms of biological role, necessary for normal cell division and for the maintenance of normal septation. The protein is Probable GTP-binding protein EngB of Gemmatimonas aurantiaca (strain DSM 14586 / JCM 11422 / NBRC 100505 / T-27).